The primary structure comprises 231 residues: Flagellar L-ring protein (231 aa).

An N-terminal signal peptide occupies residues 1–18 (MNRLLSLFALGGAVLLAG). The N-palmitoyl cysteine moiety is linked to residue cysteine 19. Cysteine 19 is lipidated: S-diacylglycerol cysteine.

The protein belongs to the FlgH family. The basal body constitutes a major portion of the flagellar organelle and consists of four rings (L,P,S, and M) mounted on a central rod.

It localises to the cell outer membrane. The protein localises to the bacterial flagellum basal body. In terms of biological role, assembles around the rod to form the L-ring and probably protects the motor/basal body from shearing forces during rotation. This Pseudomonas putida (strain W619) protein is Flagellar L-ring protein.